The primary structure comprises 282 residues: MNVCKLKEIVPLFPRSSFTDGVVSTGKSFRSWDTCMDNKACKIIAIVGIVLACILVIWLIGGLLTCFRQGVTGIGQFICWCCRCSNDRNGNNTMPVNEGFSRVNMGVAPPSTVIYQPIQQPESAYYRNDAKNDTFYDEVKTPSNEVYELEEDFDLEKQKEKTRKKQQKERNKEGRSPSRVAPLVYEEENFEGSSPQPQYDARNSFIQNAANTGSNNAHVASQSPIFDISDYGENYYYDNNNINNNLQGNSYNTPSSNHRSPYPTENYQSYQGYKPNQSDRYY.

The chain crosses the membrane as a helical span at residues 43–63; the sequence is IIAIVGIVLACILVIWLIGGL. Residues Asn91 and Asn132 are each glycosylated (N-linked (GlcNAc...) asparagine). At Thr141 the chain carries Phosphothreonine. Disordered regions lie at residues 153-183 and 246-282; these read FDLE…VAPL and LQGN…DRYY. The segment covering 253-282 has biased composition (polar residues); sequence TPSSNHRSPYPTENYQSYQGYKPNQSDRYY. Asn276 is a glycosylation site (N-linked (GlcNAc...) asparagine).

It is found in the membrane. Its function is as follows. Not known. Seems to be able to provoque the non-Mendelian trait [PIN(+)] which is required for the de novo appearance of the [PSI(+)] prion. The chain is [PSI+] induction protein 2 (PIN2) from Saccharomyces cerevisiae (strain ATCC 204508 / S288c) (Baker's yeast).